Consider the following 907-residue polypeptide: Protein translocase subunit SecA (907 aa).

ATP is bound by residues glutamine 87, 105–109 (GEGKT), and aspartate 512. Zn(2+) is bound by residues cysteine 891, cysteine 893, cysteine 902, and histidine 903.

The protein belongs to the SecA family. Monomer and homodimer. Part of the essential Sec protein translocation apparatus which comprises SecA, SecYEG and auxiliary proteins SecDF-YajC and YidC. Requires Zn(2+) as cofactor.

It localises to the cell inner membrane. It is found in the cytoplasm. It carries out the reaction ATP + H2O + cellular proteinSide 1 = ADP + phosphate + cellular proteinSide 2.. Functionally, part of the Sec protein translocase complex. Interacts with the SecYEG preprotein conducting channel. Has a central role in coupling the hydrolysis of ATP to the transfer of proteins into and across the cell membrane, serving both as a receptor for the preprotein-SecB complex and as an ATP-driven molecular motor driving the stepwise translocation of polypeptide chains across the membrane. The protein is Protein translocase subunit SecA of Shewanella loihica (strain ATCC BAA-1088 / PV-4).